An 84-amino-acid polypeptide reads, in one-letter code: NADH dehydrogenase [ubiquinone] 1 alpha subcomplex subunit 3 (84 aa).

A2 bears the N-acetylalanine mark. Residues L19–F39 form a helical membrane-spanning segment. The segment at P56–L84 is disordered.

This sequence belongs to the complex I NDUFA3 subunit family. As to quaternary structure, complex I is composed of 45 different subunits.

It localises to the mitochondrion inner membrane. In terms of biological role, accessory subunit of the mitochondrial membrane respiratory chain NADH dehydrogenase (Complex I), that is believed not to be involved in catalysis. Complex I functions in the transfer of electrons from NADH to the respiratory chain. The immediate electron acceptor for the enzyme is believed to be ubiquinone. The sequence is that of NADH dehydrogenase [ubiquinone] 1 alpha subcomplex subunit 3 (NDUFA3) from Homo sapiens (Human).